The primary structure comprises 210 residues: MAKFTNCLVLSLLLAAFVGAFGAEFSEADKATLVNDIAENIQKEILGEVKTSETVLTMFLKEMQLKGLPVCGETCFGGTCNTPGCSCTWPICTRDSLPMRAGGKTSETTLHMFLKEMQLKGLPVCGETCFGGTCNTPGCSCTWPICTRDSLPMSAGGKTSETTLHMFLKEMQLKGLPVCGETCFGGTCNTPGCSCTWPICTRDSLPLVAA.

The first 22 residues, 1 to 22 (MAKFTNCLVLSLLLAAFVGAFG), serve as a signal peptide directing secretion. Residues 23-66 (AEFSEADKATLVNDIAENIQKEILGEVKTSETVLTMFLKEMQLK) constitute a propeptide that is removed on maturation. Residues 67–95 (GLPVCGETCFGGTCNTPGCSCTWPICTRD) constitute a cross-link (cyclopeptide (Gly-Asp)). Cystine bridges form between Cys-71/Cys-85, Cys-75/Cys-87, and Cys-80/Cys-92. A propeptide spanning residues 96 to 120 (SLPMRAGGKTSETTLHMFLKEMQLK) is cleaved from the precursor. A cross-link (cyclopeptide (Gly-Asp)) is located at residues 121–149 (GLPVCGETCFGGTCNTPGCSCTWPICTRD). 3 cysteine pairs are disulfide-bonded: Cys-125/Cys-139, Cys-129/Cys-141, and Cys-134/Cys-146. The propeptide occupies 150-174 (SLPMSAGGKTSETTLHMFLKEMQLK). Positions 175-203 (GLPVCGETCFGGTCNTPGCSCTWPICTRD) form a cross-link, cyclopeptide (Gly-Asp). 3 disulfide bridges follow: Cys-179/Cys-193, Cys-183/Cys-195, and Cys-188/Cys-200. Positions 204-210 (SLPLVAA) are excised as a propeptide.

The protein belongs to the cyclotide family. Moebius subfamily. Post-translationally, kalata-B2 is a cyclic peptide which occurs in three forms: with unmodified Trp, with Trp oxidized to form N-formylkynurenine and with Trp oxidized to form kynurenine. Oxidation is enhanced by exposure to sunlight.

Functionally, probably participates in a plant defense mechanism. Inhibitory effect on the growth and development of larvae from Helicoverpa punctigera. Has hemolytic activity. This chain is Kalata-B2 (OAK4), found in Oldenlandia affinis.